The following is a 545-amino-acid chain: Membrane protein insertase YidC (545 aa).

4 helical membrane-spanning segments follow: residues I350–Y370, L424–V444, A461–L481, and P498–I518.

The protein belongs to the OXA1/ALB3/YidC family. Type 1 subfamily. As to quaternary structure, interacts with the Sec translocase complex via SecD. Specifically interacts with transmembrane segments of nascent integral membrane proteins during membrane integration.

The protein localises to the cell inner membrane. Its function is as follows. Required for the insertion and/or proper folding and/or complex formation of integral membrane proteins into the membrane. Involved in integration of membrane proteins that insert both dependently and independently of the Sec translocase complex, as well as at least some lipoproteins. Aids folding of multispanning membrane proteins. The polypeptide is Membrane protein insertase YidC (Neisseria meningitidis serogroup A / serotype 4A (strain DSM 15465 / Z2491)).